The following is a 165-amino-acid chain: Endoribonuclease YbeY (165 aa).

Positions 130, 134, and 140 each coordinate Zn(2+).

Belongs to the endoribonuclease YbeY family. It depends on Zn(2+) as a cofactor.

It is found in the cytoplasm. Single strand-specific metallo-endoribonuclease involved in late-stage 70S ribosome quality control and in maturation of the 3' terminus of the 16S rRNA. The polypeptide is Endoribonuclease YbeY (Streptococcus sanguinis (strain SK36)).